The following is a 506-amino-acid chain: Probable alpha-L-arabinofuranosidase B (506 aa).

The first 26 residues, 1 to 26, serve as a signal peptide directing secretion; the sequence is MSSGLSLERACAVALGIVASASLVAA. The interval 27–343 is catalytic; sequence GPCDIYSSGG…ADIVAAKYAI (317 aa). Intrachain disulfides connect Cys-29–Cys-39, Cys-89–Cys-94, and Cys-184–Cys-185. N-linked (GlcNAc...) asparagine glycosylation is present at Asn-91. Asp-227 provides a ligand contact to substrate. Glu-229 acts as the Nucleophile in catalysis. 2 residues coordinate substrate: Asn-230 and Gly-304. Asp-305 (proton donor) is an active-site residue. Residues 344–506 are ABD; the sequence is ASLTSGPALT…VSWVVSTGFA (163 aa). Cys-409 and Cys-447 are oxidised to a cystine. Residues His-424, Asn-426, Phe-427, Asp-443, His-471, Glu-473, Leu-476, and Asp-496 each coordinate substrate.

The protein belongs to the glycosyl hydrolase 54 family.

The protein localises to the secreted. It carries out the reaction Hydrolysis of terminal non-reducing alpha-L-arabinofuranoside residues in alpha-L-arabinosides.. It participates in glycan metabolism; L-arabinan degradation. In terms of biological role, alpha-L-arabinofuranosidase involved in the degradation of arabinoxylan, a major component of plant hemicellulose. Able to hydrolyze 1,5-, 1,3- and 1,2-alpha-linkages not only in L-arabinofuranosyl oligosaccharides, but also in polysaccharides containing terminal non-reducing L-arabinofuranoses in side chains, like L-arabinan, arabinogalactan and arabinoxylan. The chain is Probable alpha-L-arabinofuranosidase B (abfB) from Aspergillus flavus (strain ATCC 200026 / FGSC A1120 / IAM 13836 / NRRL 3357 / JCM 12722 / SRRC 167).